We begin with the raw amino-acid sequence, 301 residues long: GTPase Era (301 aa).

Residues 7 to 175 (YCGFIAIVGR…AGIVRKHLPE (169 aa)) form the Era-type G domain. The segment at 15–22 (GRPNVGKS) is G1. A GTP-binding site is contributed by 15–22 (GRPNVGKS). The segment at 41 to 45 (QTTRH) is G2. The interval 62-65 (DTPG) is G3. Residues 62 to 66 (DTPGL) and 124 to 127 (NKVD) contribute to the GTP site. The interval 124 to 127 (NKVD) is G4. Residues 154–156 (ISA) are G5. Positions 206–283 (LGAELPYSVT…HLELWVKVKS (78 aa)) constitute a KH type-2 domain.

The protein belongs to the TRAFAC class TrmE-Era-EngA-EngB-Septin-like GTPase superfamily. Era GTPase family. Monomer.

It is found in the cytoplasm. Its subcellular location is the cell inner membrane. An essential GTPase that binds both GDP and GTP, with rapid nucleotide exchange. Plays a role in 16S rRNA processing and 30S ribosomal subunit biogenesis and possibly also in cell cycle regulation and energy metabolism. The sequence is that of GTPase Era from Salmonella heidelberg (strain SL476).